A 493-amino-acid chain; its full sequence is 3-octaprenyl-4-hydroxybenzoate carboxy-lyase (493 aa).

Residue Asn172 coordinates Mn(2+). Prenylated FMN contacts are provided by residues 175–177 (IYR), 189–191 (RWL), and 194–195 (RG). Residue Glu238 coordinates Mn(2+). Residue Asp287 is the Proton donor of the active site.

The protein belongs to the UbiD family. Homohexamer. Prenylated FMN serves as cofactor. Requires Mn(2+) as cofactor.

It localises to the cell membrane. It catalyses the reaction a 4-hydroxy-3-(all-trans-polyprenyl)benzoate + H(+) = a 2-(all-trans-polyprenyl)phenol + CO2. It participates in cofactor biosynthesis; ubiquinone biosynthesis. In terms of biological role, catalyzes the decarboxylation of 3-octaprenyl-4-hydroxy benzoate to 2-octaprenylphenol, an intermediate step in ubiquinone biosynthesis. This chain is 3-octaprenyl-4-hydroxybenzoate carboxy-lyase, found in Shewanella halifaxensis (strain HAW-EB4).